The following is a 210-amino-acid chain: 23.5 kDa heat shock protein, mitochondrial (210 aa).

Residues 1–20 (MASSSALALRRLLSSSTVAV) constitute a mitochondrion transit peptide. The sHSP domain maps to 102 to 210 (MGASGVRRGW…RNNIRHINVD (109 aa)).

Belongs to the small heat shock protein (HSP20) family. As to quaternary structure, may form oligomeric structures.

The protein localises to the mitochondrion. The protein is 23.5 kDa heat shock protein, mitochondrial (HSP23.5) of Arabidopsis thaliana (Mouse-ear cress).